We begin with the raw amino-acid sequence, 89 residues long: Submaxillary mucin (89 aa).

The disordered stretch occupies residues 1-89 (AGSVGRTAGG…VGGSPVATTL (89 aa)). Serine 3 carries an O-linked (GalNAc...) serine; partial glycan. 2 O-linked (GalNAc...) threonine; partial glycosylation sites follow: threonine 7 and threonine 14. Residue serine 15 is glycosylated (O-linked (GalNAc...) serine; partial). The O-linked (GalNAc...) threonine; partial glycan is linked to threonine 23. Residue serine 25 is glycosylated (O-linked (GalNAc...) serine; partial). A glycan (O-linked (GalNAc...) threonine; partial) is linked at threonine 27. Residue serine 29 is glycosylated (O-linked (GalNAc...) serine; partial). O-linked (GalNAc...) threonine; partial glycosylation occurs at threonine 34. A glycan (O-linked (GalNAc...) serine; partial) is linked at serine 38. Threonine 42 is a glycosylation site (O-linked (GalNAc...) threonine; partial). O-linked (GalNAc...) serine; partial glycosylation is found at serine 47 and serine 49. A glycan (O-linked (GalNAc...) threonine; partial) is linked at threonine 50. The O-linked (GalNAc...) serine; partial glycan is linked to serine 54. Low complexity predominate over residues 56 to 71 (APGTTLAGRAGTTLGP). 4 O-linked (GalNAc...) threonine; partial glycosylation sites follow: threonine 59, threonine 60, threonine 67, and threonine 68. Serine 73 and serine 76 each carry an O-linked (GalNAc...) serine; partial glycan. O-linked (GalNAc...) threonine; partial glycosylation is present at threonine 78. O-linked (GalNAc...) serine; partial glycosylation is present at serine 83.

Heavily O-glycosylated at most but not all Ser and Thr residues. Expressed in the submaxillary salivary gland.

The protein localises to the secreted. The protein is Submaxillary mucin of Canis lupus familiaris (Dog).